Here is a 240-residue protein sequence, read N- to C-terminus: 2,3,4,5-tetrahydropyridine-2,6-dicarboxylate N-acetyltransferase (240 aa).

This sequence belongs to the transferase hexapeptide repeat family. DapH subfamily.

It carries out the reaction (S)-2,3,4,5-tetrahydrodipicolinate + acetyl-CoA + H2O = L-2-acetamido-6-oxoheptanedioate + CoA. It participates in amino-acid biosynthesis; L-lysine biosynthesis via DAP pathway; LL-2,6-diaminopimelate from (S)-tetrahydrodipicolinate (acetylase route): step 1/3. Its function is as follows. Catalyzes the transfer of an acetyl group from acetyl-CoA to tetrahydrodipicolinate. The sequence is that of 2,3,4,5-tetrahydropyridine-2,6-dicarboxylate N-acetyltransferase from Staphylococcus epidermidis (strain ATCC 35984 / DSM 28319 / BCRC 17069 / CCUG 31568 / BM 3577 / RP62A).